The sequence spans 259 residues: Protein unc-50 homolog (259 aa).

N-acetylmethionine is present on Met-1. The Cytoplasmic portion of the chain corresponds to Met-1 to Pro-82. Ser-6 is subject to Phosphoserine. A helical membrane pass occupies residues Ala-83–Leu-103. The Lumenal segment spans residues Asp-104 to Leu-115. The chain crosses the membrane as a helical span at residues Trp-116–Ile-136. Residues Ser-137–Ala-163 lie on the Cytoplasmic side of the membrane. The chain crosses the membrane as a helical span at residues Phe-164–Leu-184. Residues Thr-185–Thr-187 lie on the Lumenal side of the membrane. The helical transmembrane segment at Phe-188–Val-208 threads the bilayer. Topologically, residues Thr-209 to Thr-222 are cytoplasmic. The helical transmembrane segment at Val-223 to Gly-243 threads the bilayer. The Lumenal portion of the chain corresponds to Trp-244–Lys-259.

Belongs to the unc-50 family. As to expression, expressed in brain, kidney and testis, and at lower levels in heart.

Its subcellular location is the nucleus inner membrane. The protein resides in the golgi apparatus membrane. Involved in the cell surface expression of neuronal nicotinic receptors. Binds RNA. The protein is Protein unc-50 homolog (Unc50) of Rattus norvegicus (Rat).